The chain runs to 145 residues: Phospholipase A2 (145 aa).

Residues 1 to 15 (MRLLVLAALLTVGAG) form the signal peptide. Pyrrolidone carboxylic acid is present on Gln16. The propeptide at 16-22 (QAGLNSR) is removed by trypsin. Disulfide bonds link Cys33-Cys99, Cys49-Cys145, Cys51-Cys67, Cys66-Cys127, Cys73-Cys120, Cys83-Cys113, and Cys106-Cys118. 3 residues coordinate Ca(2+): Tyr50, Gly52, and Gly54. Residue His70 is part of the active site. Ca(2+) is bound at residue Asp71. Asp121 is an active-site residue.

This sequence belongs to the phospholipase A2 family. Monomer or homodimer. Requires Ca(2+) as cofactor. In terms of processing, activated by trypsin cleavage in the duodenum. Can also be activated by thrombin or autocatalytically.

It is found in the secreted. The enzyme catalyses a 1,2-diacyl-sn-glycero-3-phosphocholine + H2O = a 1-acyl-sn-glycero-3-phosphocholine + a fatty acid + H(+). It catalyses the reaction 1,2-ditetradecanoyl-sn-glycero-3-phosphocholine + H2O = 1-tetradecanoyl-sn-glycero-3-phosphocholine + tetradecanoate + H(+). The catalysed reaction is 1,2-dihexadecanoyl-sn-glycero-3-phosphocholine + H2O = 1-hexadecanoyl-sn-glycero-3-phosphocholine + hexadecanoate + H(+). It carries out the reaction 1-hexadecanoyl-2-(9Z-octadecenoyl)-sn-glycero-3-phosphocholine + H2O = 1-hexadecanoyl-sn-glycero-3-phosphocholine + (9Z)-octadecenoate + H(+). The enzyme catalyses 1-hexadecanoyl-2-(5Z,8Z,11Z,14Z-eicosatetraenoyl)-sn-glycero-3-phosphocholine + H2O = 1-hexadecanoyl-sn-glycero-3-phosphocholine + (5Z,8Z,11Z,14Z)-eicosatetraenoate + H(+). It catalyses the reaction 1-hexadecanoyl-2-(9Z-octadecenoyl)-sn-glycero-3-phospho-(1'-sn-glycerol) + H2O = 1-hexadecanoyl-sn-glycero-3-phospho-(1'-sn-glycerol) + (9Z)-octadecenoate + H(+). The catalysed reaction is N-hexadecanoyl-1,2-di-(9Z-octadecenoyl)-sn-glycero-3-phosphoethanolamine + H2O = N-hexadecanoyl-1-(9Z-octadecenoyl)-sn-glycero-3-phosphoethanolamine + (9Z)-octadecenoate + H(+). It carries out the reaction 1-hexadecanoyl-2-(9Z,12Z-octadecadienoyl)-sn-glycero-3-phosphoethanolamine + H2O = 1-hexadecanoyl-sn-glycero-3-phosphoethanolamine + (9Z,12Z)-octadecadienoate + H(+). The enzyme catalyses N,1-dihexadecanoyl-2-(9Z,12Z-octadecadienoyl)-sn-glycero-3-phosphoethanolamine + H2O = N,1-dihexadecanoyl-sn-glycero-3-phosphoethanolamine + (9Z,12Z)-octadecadienoate + H(+). Its function is as follows. Secretory calcium-dependent phospholipase A2 that primarily targets dietary phospholipids in the intestinal tract. Hydrolyzes the ester bond of the fatty acyl group attached at sn-2 position of phospholipids (phospholipase A2 activity) with preference for phosphatidylethanolamines and phosphatidylglycerols over phosphatidylcholines. May play a role in the biosynthesis of N-acyl ethanolamines that regulate energy metabolism and inflammation in the intestinal tract. Hydrolyzes N-acyl phosphatidylethanolamines to N-acyl lysophosphatidylethanolamines, which are further cleaved by a lysophospholipase D to release N-acyl ethanolamines. May act in an autocrine and paracrine manner. Has anti-helminth activity in a process regulated by gut microbiota. Upon helminth infection of intestinal epithelia, directly affects phosphatidylethanolamine contents in the membrane of helminth larvae, likely controlling an array of phospholipid-mediated cellular processes such as membrane fusion and cell division while providing for better immune recognition, ultimately reducing larvae integrity and infectivity. This chain is Phospholipase A2 (PLA2G1B), found in Bos taurus (Bovine).